A 155-amino-acid chain; its full sequence is Small ribosomal subunit protein uS7c (155 aa).

This sequence belongs to the universal ribosomal protein uS7 family. In terms of assembly, part of the 30S ribosomal subunit.

Its subcellular location is the plastid. In terms of biological role, one of the primary rRNA binding proteins, it binds directly to 16S rRNA where it nucleates assembly of the head domain of the 30S subunit. This Lathraea clandestina (Purple toothwort) protein is Small ribosomal subunit protein uS7c (rps7).